Reading from the N-terminus, the 456-residue chain is Putative gluconeogenesis factor (456 aa).

The protein belongs to the gluconeogenesis factor family.

It is found in the cytoplasm. In terms of biological role, required for morphogenesis under gluconeogenic growth conditions. The sequence is that of Putative gluconeogenesis factor from Nostoc sp. (strain PCC 7120 / SAG 25.82 / UTEX 2576).